We begin with the raw amino-acid sequence, 326 residues long: ELMO domain-containing protein 1 (326 aa).

The region spanning 133-306 is the ELMO domain; that stretch reads QHEEMLLKLW…KFRKRIIKQL (174 aa).

Its function is as follows. Acts as a GTPase-activating protein (GAP) toward guanine nucleotide exchange factors like ARL2, ARL3, ARF1 and ARF6, but not for GTPases outside the Arf family. The sequence is that of ELMO domain-containing protein 1 (ELMOD1) from Pongo abelii (Sumatran orangutan).